We begin with the raw amino-acid sequence, 130 residues long: Fluoride-specific ion channel FluC (130 aa).

Transmembrane regions (helical) follow at residues 2–22 (GLLL…RFAL), 36–56 (GILL…AFLI), 71–91 (FLLV…SLDI), and 100–120 (IFIA…AVIL). Positions 79 and 82 each coordinate Na(+).

It belongs to the fluoride channel Fluc/FEX (TC 1.A.43) family.

The protein resides in the cell inner membrane. The catalysed reaction is fluoride(in) = fluoride(out). With respect to regulation, na(+) is not transported, but it plays an essential structural role and its presence is essential for fluoride channel function. Its function is as follows. Fluoride-specific ion channel. Important for reducing fluoride concentration in the cell, thus reducing its toxicity. The protein is Fluoride-specific ion channel FluC of Francisella tularensis subsp. tularensis (strain FSC 198).